The sequence spans 269 residues: 2' cyclic ADP-D-ribose synthase AbTIR (269 aa).

A coiled-coil region spans residues 31 to 99; that stretch reads LKTKLSEISR…KQQKDEIEHQ (69 aa). In terms of domain architecture, TIR spans 133 to 266; the sequence is PEYDLFISHA…EIAHQLADVI (134 aa). Positions 143, 172, and 202 each coordinate NAD(+). Glu-208 is an active-site residue. Lys-245 serves as a coordination point for NAD(+).

As to quaternary structure, homodimer. In the presence of NAD(+) analog 8-amino-isoquinoline adenine dinucleotide (3AD) forms filaments with 3AD between monomers; conformational changes occur upon 3AD binding.

The catalysed reaction is NAD(+) = 2'cADPR + nicotinamide + H(+). It carries out the reaction NAD(+) + H2O = ADP-D-ribose + nicotinamide + H(+). The enzyme catalyses NADP(+) + H2O = ADP-D-ribose 2'-phosphate + nicotinamide + H(+). Functionally, NAD(+) hydrolase (NADase) that catalyzes cleavage of NAD(+) into ADP-D-ribose (ADPR) and nicotinamide. In addition to ADPR, also generates a cyclization variant of cyclic ADPR (cADPR), termed 2'cADPR (v-cADPR). Cleaves NADP(+), but does not cyclize the product. This is 2' cyclic ADP-D-ribose synthase AbTIR from Acinetobacter baumannii (strain 1295743).